The primary structure comprises 330 residues: Phospho-N-acetylmuramoyl-pentapeptide-transferase (330 aa).

Transmembrane regions (helical) follow at residues Val13–Met33, Pro58–Gly78, Ile83–Ile103, Leu113–Leu133, Val152–Ala172, Leu179–Met199, Met209–Ala229, Ile231–Ile250, and Val304–Ala324.

The protein belongs to the glycosyltransferase 4 family. MraY subfamily. Mg(2+) serves as cofactor.

The protein resides in the cell membrane. The enzyme catalyses UDP-N-acetyl-alpha-D-muramoyl-L-alanyl-gamma-D-glutamyl-meso-2,6-diaminopimeloyl-D-alanyl-D-alanine + di-trans,octa-cis-undecaprenyl phosphate = di-trans,octa-cis-undecaprenyl diphospho-N-acetyl-alpha-D-muramoyl-L-alanyl-D-glutamyl-meso-2,6-diaminopimeloyl-D-alanyl-D-alanine + UMP. The protein operates within cell wall biogenesis; peptidoglycan biosynthesis. Functionally, catalyzes the initial step of the lipid cycle reactions in the biosynthesis of the cell wall peptidoglycan: transfers peptidoglycan precursor phospho-MurNAc-pentapeptide from UDP-MurNAc-pentapeptide onto the lipid carrier undecaprenyl phosphate, yielding undecaprenyl-pyrophosphoryl-MurNAc-pentapeptide, known as lipid I. The chain is Phospho-N-acetylmuramoyl-pentapeptide-transferase from Acetivibrio thermocellus (strain ATCC 27405 / DSM 1237 / JCM 9322 / NBRC 103400 / NCIMB 10682 / NRRL B-4536 / VPI 7372) (Clostridium thermocellum).